We begin with the raw amino-acid sequence, 808 residues long: Disks large-associated protein 5 (808 aa).

Serine 66 and serine 70 each carry phosphoserine. Residues 88–119 adopt a coiled-coil conformation; the sequence is QRKQLLQKYKEEKQLQKLKEQREKAKRGVFKV. Positions 134 to 282 are disordered; it reads QRGAKAEPEK…QTRETSEMGP (149 aa). Composition is skewed to basic and acidic residues over residues 135–145 and 180–193; these read RGAKAEPEKAF and QTSE…ERKV. A Phosphoserine modification is found at serine 201. Composition is skewed to basic and acidic residues over residues 232–241 and 249–278; these read TNEKGSERMR and KKPE…RETS. Serine 328 is subject to Phosphoserine. Residues threonine 337 and threonine 386 each carry the phosphothreonine modification. A disordered region spans residues 377 to 413; it reads HVLNQKGASTSDSNHASVKGVPCSEGSEGQTSQPPHD. Residues 382-392 show a composition bias toward polar residues; sequence KGASTSDSNHA. Serine 598 is subject to Phosphoserine. Serine 607 is subject to Phosphoserine; by AURKA. Serine 612 carries the post-translational modification Phosphoserine. Threonine 617 bears the Phosphothreonine mark. Serine 620 is subject to Phosphoserine. The segment at 629–654 is disordered; it reads RAAGDLLRQKMPLKKPDPQSSKSEHV. Positions 642–654 are enriched in basic and acidic residues; it reads KKPDPQSSKSEHV. Position 728 is a phosphothreonine (threonine 728). The tract at residues 735–757 is disordered; sequence SNPETNTSSQSNTSQEEAEASQS. Residue serine 743 is modified to Phosphoserine. Serine 797 carries the post-translational modification Phosphoserine; by AURKA. Residue serine 806 is modified to Phosphoserine.

This sequence belongs to the SAPAP family. Interacts with CDC2. Interacts with the C-terminal proline-rich region of FBXO7. Recruited by FBXO7 to a SCF (SKP1-CUL1-F-box) protein complex in a CDC2/Cyclin B-phosphorylation dependent manner. Interacts with CDH1. Post-translationally, ubiquitinated, leading to its degradation. In terms of processing, decreased phosphorylation levels are associated with the differentiation of intestinal epithelial cells. In terms of tissue distribution, expressed at low levels in normal resting liver. Up-regulated in regenerating liver after partial hepatectomy.

It localises to the nucleus. It is found in the cytoplasm. The protein resides in the cytoskeleton. Its subcellular location is the spindle. In terms of biological role, potential cell cycle regulator that may play a role in carcinogenesis of cancer cells. Mitotic phosphoprotein regulated by the ubiquitin-proteasome pathway. Key regulator of adherens junction integrity and differentiation that may be involved in CDH1-mediated adhesion and signaling in epithelial cells. This chain is Disks large-associated protein 5 (Dlgap5), found in Mus musculus (Mouse).